We begin with the raw amino-acid sequence, 825 residues long: Putative NAD(+)--arginine ADP-ribosyltransferase Mav (825 aa).

Positions A435–H673 are disordered. Pro residues-rich tracts occupy residues P443–P457 and S468–H491. Positions P560–G579 are enriched in low complexity. Positions P580–P589 are enriched in pro residues. A compositionally biased stretch (low complexity) spans E590–S599. A TR mART core domain is found at K650–R825. Residues G656–L670 are compositionally biased toward basic and acidic residues. Residues T687–R699, R730–N733, and E750 each bind NAD(+). R730 is an active-site residue. Active-site residues include S755 and E795. E795 is an NAD(+) binding site.

It belongs to the Arg-specific ADP-ribosyltransferase family.

The protein localises to the secreted. It carries out the reaction L-arginyl-[protein] + NAD(+) = N(omega)-(ADP-D-ribosyl)-L-arginyl-[protein] + nicotinamide + H(+). A probable mono(ADP-ribosyl)transferase, it may ADP-ribosylate Arg in target protein(s). This Mycobacterium avium (strain 104) protein is Putative NAD(+)--arginine ADP-ribosyltransferase Mav.